The following is a 263-amino-acid chain: ATP synthase subunit b 2 (263 aa).

Residues 2–22 (LIDPLTVVAQIINFLILVALL) form a helical membrane-spanning segment.

The protein belongs to the ATPase B chain family. F-type ATPases have 2 components, F(1) - the catalytic core - and F(0) - the membrane proton channel. F(1) has five subunits: alpha(3), beta(3), gamma(1), delta(1), epsilon(1). F(0) has four main subunits: a(1), b(1), b'(1) and c(10-14). The alpha and beta chains form an alternating ring which encloses part of the gamma chain. F(1) is attached to F(0) by a central stalk formed by the gamma and epsilon chains, while a peripheral stalk is formed by the delta, b and b' chains.

Its subcellular location is the cellular thylakoid membrane. In terms of biological role, f(1)F(0) ATP synthase produces ATP from ADP in the presence of a proton or sodium gradient. F-type ATPases consist of two structural domains, F(1) containing the extramembraneous catalytic core and F(0) containing the membrane proton channel, linked together by a central stalk and a peripheral stalk. During catalysis, ATP synthesis in the catalytic domain of F(1) is coupled via a rotary mechanism of the central stalk subunits to proton translocation. Functionally, component of the F(0) channel, it forms part of the peripheral stalk, linking F(1) to F(0). The chain is ATP synthase subunit b 2 from Acaryochloris marina (strain MBIC 11017).